The following is a 152-amino-acid chain: MIALIQRVRRAEVRVADRVTGAIEAGLLALVCAERGDSEAAADRLLAKVLGYRVFSDAAGKMNLSVQNLDGAGRAGGLLLVSQFTLAADTNSGLRPSFTPAAPPDEGKRLFDYFVAAARAKHPIVETGEFGADMQVSLVNDGPVTFWLQTNA.

Positions 142 to 143 match the Gly-cisPro motif, important for rejection of L-amino acids motif; sequence GP.

It belongs to the DTD family. As to quaternary structure, homodimer.

The protein resides in the cytoplasm. The enzyme catalyses glycyl-tRNA(Ala) + H2O = tRNA(Ala) + glycine + H(+). It catalyses the reaction a D-aminoacyl-tRNA + H2O = a tRNA + a D-alpha-amino acid + H(+). In terms of biological role, an aminoacyl-tRNA editing enzyme that deacylates mischarged D-aminoacyl-tRNAs. Also deacylates mischarged glycyl-tRNA(Ala), protecting cells against glycine mischarging by AlaRS. Acts via tRNA-based rather than protein-based catalysis; rejects L-amino acids rather than detecting D-amino acids in the active site. By recycling D-aminoacyl-tRNA to D-amino acids and free tRNA molecules, this enzyme counteracts the toxicity associated with the formation of D-aminoacyl-tRNA entities in vivo and helps enforce protein L-homochirality. This Paraburkholderia phytofirmans (strain DSM 17436 / LMG 22146 / PsJN) (Burkholderia phytofirmans) protein is D-aminoacyl-tRNA deacylase.